A 68-amino-acid polypeptide reads, in one-letter code: Putative transcript Y 10 protein (68 aa).

The chain is Putative transcript Y 10 protein (TTTY10) from Homo sapiens (Human).